A 70-amino-acid polypeptide reads, in one-letter code: DNA-directed RNA polymerase subunit omega (70 aa).

Belongs to the RNA polymerase subunit omega family. As to quaternary structure, the RNAP catalytic core consists of 2 alpha, 1 beta, 1 beta' and 1 omega subunit. When a sigma factor is associated with the core the holoenzyme is formed, which can initiate transcription.

The catalysed reaction is RNA(n) + a ribonucleoside 5'-triphosphate = RNA(n+1) + diphosphate. Promotes RNA polymerase assembly. Latches the N- and C-terminal regions of the beta' subunit thereby facilitating its interaction with the beta and alpha subunits. This is DNA-directed RNA polymerase subunit omega from Clostridium perfringens (strain ATCC 13124 / DSM 756 / JCM 1290 / NCIMB 6125 / NCTC 8237 / Type A).